Reading from the N-terminus, the 669-residue chain is Matrix metalloproteinase-15 (669 aa).

A signal peptide (or 45) is located at residues 1 to 41 (MGSDPSAPGRPGWTGSLLGDREEAARPRLLPLLLVLLGCLG). Residues 42–131 (LGVAAEDAEV…KANLRRRRKR (90 aa)) constitute a propeptide that is removed on maturation. Residues 109-116 (PRCGVPDQ) carry the Cysteine switch motif. Cys111 lines the Zn(2+) pocket. Residues 132–625 (YALTGRKWNN…QMEEVARTVN (494 aa)) lie on the Extracellular side of the membrane. N-linked (GlcNAc...) asparagine glycosylation occurs at Asn150. His259 contacts Zn(2+). Glu260 is a catalytic residue. Residues His263 and His269 each coordinate Zn(2+). Positions 300 to 370 (QQLYGTPDGQ…RPDQYGPNIC (71 aa)) are disordered. Residues 305–322 (TPDGQPQPTQPLPTVTPR) are compositionally biased toward low complexity. Pro residues predominate over residues 333–342 (RPPQPPPPGG). 4 Hemopexin repeats span residues 367–415 (PNIC…WRGL), 416–461 (PGDI…GLGI), 463–511 (YDRI…QGIP), and 512–559 (ASPK…FMGC). A disulfide bridge links Cys370 with Cys559. Positions 574-593 (RPPFNPHGGAEPGADSAEGD) are disordered. Ser589 is subject to Phosphoserine. Residues 626–646 (VVMVLVPLLLLLCVLGLTYAL) form a helical membrane-spanning segment. Residues 647 to 669 (VQMQRKGAPRVLLYCKRSLQEWV) are Cytoplasmic-facing.

The protein belongs to the peptidase M10A family. Zn(2+) serves as cofactor. The cofactor is Ca(2+). In terms of processing, the precursor is cleaved by a furin endopeptidase. As to expression, appeared to be synthesized preferentially in liver, placenta, testis, colon and intestine. Substantial amounts are also detected in pancreas, kidney, lung, heart and skeletal muscle.

It is found in the membrane. Its function is as follows. Endopeptidase that degrades various components of the extracellular matrix. May activate progelatinase A. In Homo sapiens (Human), this protein is Matrix metalloproteinase-15 (MMP15).